Consider the following 597-residue polypeptide: Aspartate--tRNA(Asp/Asn) ligase (597 aa).

Residue E170 participates in L-aspartate binding. Positions 194 to 197 are aspartate; the sequence is QLFK. Residue R216 participates in L-aspartate binding. ATP contacts are provided by residues 216–218 and Q225; that span reads RDE. H448 is an L-aspartate binding site. E482 is an ATP binding site. R489 serves as a coordination point for L-aspartate. 534-537 serves as a coordination point for ATP; that stretch reads GWDR. The segment at 558 to 597 is disordered; it reads GGGVDPLTDAPAPITAAQRKESGIDAKPEKAEKAGKPADA. The segment covering 575-597 has biased composition (basic and acidic residues); the sequence is QRKESGIDAKPEKAEKAGKPADA.

It belongs to the class-II aminoacyl-tRNA synthetase family. Type 1 subfamily. As to quaternary structure, homodimer.

It localises to the cytoplasm. The catalysed reaction is tRNA(Asx) + L-aspartate + ATP = L-aspartyl-tRNA(Asx) + AMP + diphosphate. Its function is as follows. Aspartyl-tRNA synthetase with relaxed tRNA specificity since it is able to aspartylate not only its cognate tRNA(Asp) but also tRNA(Asn). Reaction proceeds in two steps: L-aspartate is first activated by ATP to form Asp-AMP and then transferred to the acceptor end of tRNA(Asp/Asn). This chain is Aspartate--tRNA(Asp/Asn) ligase, found in Mycobacteroides abscessus (strain ATCC 19977 / DSM 44196 / CCUG 20993 / CIP 104536 / JCM 13569 / NCTC 13031 / TMC 1543 / L948) (Mycobacterium abscessus).